The following is a 628-amino-acid chain: Pinene synthase, chloroplastic (628 aa).

The transit peptide at 1–36 directs the protein to the chloroplast; it reads MALVSTAPLASKSCLHKSLISSTHELKALSRTIPAL. Residues Asp-379, Asp-383, and Asp-531 each coordinate Mg(2+). Positions 379 to 383 match the DDXXD motif motif; that stretch reads DDMYD.

The protein belongs to the terpene synthase family. Tpsd subfamily. It depends on Mg(2+) as a cofactor. Mn(2+) serves as cofactor. Requires K(+) as cofactor.

The protein resides in the plastid. The protein localises to the chloroplast. It carries out the reaction (2E)-geranyl diphosphate = (1S,5S)-alpha-pinene + diphosphate. It catalyses the reaction (2E)-geranyl diphosphate = (1S,5S)-beta-pinene + diphosphate. Its pathway is terpene metabolism; oleoresin biosynthesis. Functionally, involved in defensive oleoresin formation in conifers in response to insect attack or other injury. Involved in monoterpene (C10) olefins biosynthesis. A mixture of alpha- and beta-pinene is produced by this enzyme. The chain is Pinene synthase, chloroplastic (ag3) from Abies grandis (Grand fir).